A 214-amino-acid polypeptide reads, in one-letter code: Adenylate kinase (214 aa).

10–15 (GAGKGT) contributes to the ATP binding site. The segment at 30–59 (STGDMFRDHKARGTEIGKQVQAIMDAGGLV) is NMP. AMP is bound by residues Thr31, Arg36, 57-59 (GLV), 85-88 (GYPR), and Gln92. The segment at 126-163 (GRRSCPRCGAVYHVSQNPPHRAGFCDRDDAALVQREDD) is LID. Arg127 is a binding site for ATP. The Zn(2+) site is built by Cys130 and Cys133. 136–137 (VY) is an ATP binding site. The Zn(2+) site is built by Cys150 and Asp153. Positions 160 and 171 each coordinate AMP. Residue Gly199 coordinates ATP.

It belongs to the adenylate kinase family. Monomer.

It localises to the cytoplasm. The enzyme catalyses AMP + ATP = 2 ADP. It functions in the pathway purine metabolism; AMP biosynthesis via salvage pathway; AMP from ADP: step 1/1. In terms of biological role, catalyzes the reversible transfer of the terminal phosphate group between ATP and AMP. Plays an important role in cellular energy homeostasis and in adenine nucleotide metabolism. This is Adenylate kinase from Anaeromyxobacter dehalogenans (strain 2CP-1 / ATCC BAA-258).